The sequence spans 506 residues: Maturase K (506 aa).

It belongs to the intron maturase 2 family. MatK subfamily.

It is found in the plastid. The protein resides in the chloroplast. Functionally, usually encoded in the trnK tRNA gene intron. Probably assists in splicing its own and other chloroplast group II introns. This Crataegus monogyna (Hawthorn) protein is Maturase K.